Reading from the N-terminus, the 459-residue chain is Interleukin-7 receptor subunit alpha (459 aa).

The N-terminal stretch at 1-20 (MTILGTTFGVFFSLLQVVSG) is a signal peptide. The Extracellular portion of the chain corresponds to 21–241 (ESGYAQNGDL…NNHSGETNPT (221 aa)). Cysteine 42 and cysteine 57 are oxidised to a cystine. N-linked (GlcNAc...) asparagine glycans are attached at residues asparagine 49 and asparagine 65. Cystine bridges form between cysteine 74-cysteine 82 and cysteine 108-cysteine 118. The Fibronectin type-III domain occupies 131–231 (APFDLSVIYR…PSYYFRTPEI (101 aa)). An N-linked (GlcNAc...) asparagine glycan is attached at asparagine 182. The WSXWS motif motif lies at 217–221 (WSEWS). The chain crosses the membrane as a helical span at residues 242-262 (LLTISILSVLSVVLLVILACV). The Cytoplasmic segment spans residues 263 to 459 (LWKKRIKPII…VTMSSFCQKR (197 aa)). Residues 272 to 280 (IWPSLPDHK) carry the Box 1 motif motif. The residue at position 282 (threonine 282) is a Phosphothreonine; by PKC. The interval 327–357 (TVPPQLEESETQRPGGDVQSPSWPSENVVTT) is disordered. Residues 345–357 (QSPSWPSENVVTT) show a composition bias toward polar residues.

Belongs to the type I cytokine receptor family. Type 4 subfamily. The IL7 receptor is a heterodimer of IL7R and IL2RG. The TSLP receptor is a heterodimer of CRLF2 and IL7R. Interacts with CD53. In terms of processing, N-glycosylated IL-7Ralpha binds IL7 300-fold more tightly than the unglycosylated form. Ubiquitinated by MARCHF8; leading to lysosomal degradation.

It is found in the cell membrane. Functionally, receptor for interleukin-7. Also acts as a receptor for thymic stromal lymphopoietin (TSLP). The chain is Interleukin-7 receptor subunit alpha (IL7R) from Callithrix jacchus (White-tufted-ear marmoset).